We begin with the raw amino-acid sequence, 233 residues long: Purine nucleoside phosphorylase DeoD-type (233 aa).

His4 is an a purine D-ribonucleoside binding site. Phosphate-binding positions include Gly20, Arg24, Arg43, and 87–90 (RIGT). Residues 179 to 181 (EME) and 203 to 204 (SD) contribute to the a purine D-ribonucleoside site. Catalysis depends on Asp204, which acts as the Proton donor.

The protein belongs to the PNP/UDP phosphorylase family. Homohexamer; trimer of homodimers.

It carries out the reaction a purine D-ribonucleoside + phosphate = a purine nucleobase + alpha-D-ribose 1-phosphate. It catalyses the reaction a purine 2'-deoxy-D-ribonucleoside + phosphate = a purine nucleobase + 2-deoxy-alpha-D-ribose 1-phosphate. In terms of biological role, catalyzes the reversible phosphorolytic breakdown of the N-glycosidic bond in the beta-(deoxy)ribonucleoside molecules, with the formation of the corresponding free purine bases and pentose-1-phosphate. The sequence is that of Purine nucleoside phosphorylase DeoD-type from Helicobacter pylori (strain HPAG1).